Consider the following 103-residue polypeptide: Acyl-CoA-binding protein (103 aa).

In terms of domain architecture, ACB spans His18–Ile103. An acyl-CoA is bound by residues Lys30, Tyr45–Lys49, Lys67, Lys71, and Tyr90.

It belongs to the ACBP family. As to quaternary structure, monomer.

Its subcellular location is the endoplasmic reticulum. The protein resides in the golgi apparatus. In terms of biological role, binds medium- and long-chain acyl-CoA esters with very high affinity and may function as an intracellular carrier of acyl-CoA esters. It is also able to displace diazepam from the benzodiazepine (BZD) recognition site located on the GABA type A receptor. It is therefore possible that this protein also acts as a neuropeptide to modulate the action of the GABA receptor. This is Acyl-CoA-binding protein (DBI) from Anas platyrhynchos (Mallard).